Here is a 274-residue protein sequence, read N- to C-terminus: tRNA pseudouridine synthase A (274 aa).

The Nucleophile role is filled by Asp-60. Substrate is bound at residue Tyr-118.

It belongs to the tRNA pseudouridine synthase TruA family. Homodimer.

The catalysed reaction is uridine(38/39/40) in tRNA = pseudouridine(38/39/40) in tRNA. Functionally, formation of pseudouridine at positions 38, 39 and 40 in the anticodon stem and loop of transfer RNAs. The sequence is that of tRNA pseudouridine synthase A from Picosynechococcus sp. (strain ATCC 27264 / PCC 7002 / PR-6) (Agmenellum quadruplicatum).